A 64-amino-acid chain; its full sequence is U-poneritoxin(01)-Om1a (64 aa).

The first 27 residues, 1-27, serve as a signal peptide directing secretion; it reads MKPSGLTFAFLVVFMMAIMYNSVQVTA. The propeptide occupies 28-45; the sequence is DADADAEAEALANALAEA. Met-62 is modified (methionine amide).

In terms of processing, truncated sequences of this peptide have also been found in the venom. It is possible they have been cleaved in the venom. In terms of tissue distribution, expressed by the venom gland.

Its subcellular location is the secreted. Its function is as follows. Antimicrobial peptide with activities against E.coli (MIC=1.3 uM), S.aureus (MIC=3.1 uM), and S.cerevisiae (MIC=50 uM). Also shows histamine-releasing activity (32.9% at 10 uM). Does not show hemolytic activity, even at 50 uM. It is a short peptide for which no alpha-helical region has been predicted. This chain is U-poneritoxin(01)-Om1a, found in Odontomachus monticola (Trap-jaw ant).